The following is a 410-amino-acid chain: Argininosuccinate synthase (410 aa).

10-18 serves as a coordination point for ATP; it reads AYSGGLDTS. L-citrulline is bound by residues tyrosine 88 and serine 93. Position 118 (glycine 118) interacts with ATP. Residues threonine 120, asparagine 124, and aspartate 125 each coordinate L-aspartate. Position 124 (asparagine 124) interacts with L-citrulline. Residues arginine 128, serine 177, serine 186, glutamate 262, and tyrosine 274 each coordinate L-citrulline.

Belongs to the argininosuccinate synthase family. Type 1 subfamily. Homotetramer.

The protein localises to the cytoplasm. The enzyme catalyses L-citrulline + L-aspartate + ATP = 2-(N(omega)-L-arginino)succinate + AMP + diphosphate + H(+). Its pathway is amino-acid biosynthesis; L-arginine biosynthesis; L-arginine from L-ornithine and carbamoyl phosphate: step 2/3. The protein is Argininosuccinate synthase of Thermoanaerobacter sp. (strain X514).